Here is a 282-residue protein sequence, read N- to C-terminus: HTH-type transcriptional activator RhaR (282 aa).

Positions 179-277 (DKLITALANS…GMTPSQWRHL (99 aa)) constitute an HTH araC/xylS-type domain. 2 consecutive DNA-binding regions (H-T-H motif) follow at residues 196 to 217 (DAFC…RAQT) and 244 to 267 (ISEI…TRET).

As to quaternary structure, binds DNA as a dimer.

It is found in the cytoplasm. In terms of biological role, activates expression of the rhaSR operon in response to L-rhamnose. This is HTH-type transcriptional activator RhaR from Salmonella arizonae (strain ATCC BAA-731 / CDC346-86 / RSK2980).